The chain runs to 237 residues: 2,3-bisphosphoglycerate-dependent phosphoglycerate mutase (237 aa).

Substrate contacts are provided by residues 10 to 17, 23 to 24, Arg-62, 89 to 92, Lys-100, 116 to 117, and 185 to 186; these read RHGESKWN, TG, ERHY, RR, and GN. His-11 acts as the Tele-phosphohistidine intermediate in catalysis. The active-site Proton donor/acceptor is the Glu-89.

This sequence belongs to the phosphoglycerate mutase family. BPG-dependent PGAM subfamily. In terms of assembly, homodimer.

The enzyme catalyses (2R)-2-phosphoglycerate = (2R)-3-phosphoglycerate. It participates in carbohydrate degradation; glycolysis; pyruvate from D-glyceraldehyde 3-phosphate: step 3/5. Its function is as follows. Catalyzes the interconversion of 2-phosphoglycerate and 3-phosphoglycerate. This Baumannia cicadellinicola subsp. Homalodisca coagulata protein is 2,3-bisphosphoglycerate-dependent phosphoglycerate mutase.